The chain runs to 352 residues: Dihydrorhizobitoxine desaturase (352 aa).

Transmembrane regions (helical) follow at residues 53-73, 89-109, and 204-224; these read LATL…IGAY, LAKN…YPLF, and IGIL…LFWI.

Belongs to the fatty acid desaturase type 1 family.

Its subcellular location is the cell inner membrane. The catalysed reaction is dihydrorhizobitoxine + 2 reduced [2Fe-2S]-[ferredoxin] + O2 + 2 H(+) = rhizobitoxine + 2 oxidized [2Fe-2S]-[ferredoxin] + 2 H2O. Functionally, involved in the biosynthesis of the nodulation enhancer compound rhizobitoxine. Catalyzes the final step of the pathway, the introduction of a carbon double bond into the C3 position of dihydrorhizobitoxine to produce rhizobitoxine. This is Dihydrorhizobitoxine desaturase from Bradyrhizobium elkanii.